Reading from the N-terminus, the 395-residue chain is Flavohemoprotein (395 aa).

The 136-residue stretch at 1-136 (MLDQQTIATI…LANVFIQRES (136 aa)) folds into the Globin domain. Histidine 85 is a heme b binding site. Catalysis depends on charge relay system residues tyrosine 95 and glutamate 135. Residues 147–395 (GGWHGIRPFR…YECFGPHKVI (249 aa)) form a reductase region. Positions 150–255 (HGIRPFRIVA…AAPHGDFYLE (106 aa)) constitute an FAD-binding FR-type domain. FAD-binding positions include tyrosine 188 and 204–207 (RQYS). An NADP(+)-binding site is contributed by 268–273 (GVGQTP). Residue 388-391 (CFGP) participates in FAD binding.

It belongs to the globin family. Two-domain flavohemoproteins subfamily. In the C-terminal section; belongs to the flavoprotein pyridine nucleotide cytochrome reductase family. Requires heme b as cofactor. It depends on FAD as a cofactor.

It localises to the cytoplasm. The enzyme catalyses 2 nitric oxide + NADPH + 2 O2 = 2 nitrate + NADP(+) + H(+). The catalysed reaction is 2 nitric oxide + NADH + 2 O2 = 2 nitrate + NAD(+) + H(+). Functionally, is involved in NO detoxification in an aerobic process, termed nitric oxide dioxygenase (NOD) reaction that utilizes O(2) and NAD(P)H to convert NO to nitrate, which protects the bacterium from various noxious nitrogen compounds. Therefore, plays a central role in the inducible response to nitrosative stress. This chain is Flavohemoprotein (hmp), found in Dickeya dadantii (strain 3937) (Erwinia chrysanthemi (strain 3937)).